The primary structure comprises 211 residues: Redox-sensing transcriptional repressor Rex (211 aa).

The segment at residues Leu16–Phe55 is a DNA-binding region (H-T-H motif). Residue Gly90–Gly95 participates in NAD(+) binding.

Belongs to the transcriptional regulatory Rex family. In terms of assembly, homodimer.

Its subcellular location is the cytoplasm. Its function is as follows. Modulates transcription in response to changes in cellular NADH/NAD(+) redox state. This is Redox-sensing transcriptional repressor Rex from Lactobacillus acidophilus (strain ATCC 700396 / NCK56 / N2 / NCFM).